Consider the following 856-residue polypeptide: Leucine--tRNA ligase (856 aa).

Positions 53-63 (PYPSGNLHMGH) match the 'HIGH' region motif. The 'KMSKS' region motif lies at 622 to 626 (KMSKS). Lysine 625 serves as a coordination point for ATP.

The protein belongs to the class-I aminoacyl-tRNA synthetase family.

The protein resides in the cytoplasm. The catalysed reaction is tRNA(Leu) + L-leucine + ATP = L-leucyl-tRNA(Leu) + AMP + diphosphate. The polypeptide is Leucine--tRNA ligase (Prochlorococcus marinus (strain AS9601)).